Here is a 599-residue protein sequence, read N- to C-terminus: Fructan 1-exohydrolase (599 aa).

Residues 1-16 (MAQAWAFLLLPALALA) form the signal peptide. Asp-78 is a catalytic residue. Residues Asn-171, Asn-239, and Asn-251 are each glycosylated (N-linked (GlcNAc...) asparagine). An intrachain disulfide couples Cys-449 to Cys-495.

Belongs to the glycosyl hydrolase 32 family.

The enzyme catalyses Hydrolysis of terminal, non-reducing (2-&gt;1)-linked beta-D-fructofuranose residues in fructans.. Its activity is regulated as follows. Inhibited by sucrose. Its function is as follows. Hydrolyzes inulin-type beta-(2,1)-fructans. May play a role as a beta-(2,1)-trimmer during graminan biosynthesis. This Hordeum vulgare (Barley) protein is Fructan 1-exohydrolase.